A 631-amino-acid chain; its full sequence is Nucleoside triphosphatase I (631 aa).

A Helicase ATP-binding domain is found at 42–204; the sequence is FLGLDSMHSL…TMLVNLLRPG (163 aa). 55–62 contacts ATP; that stretch reads HETGVGKT. Positions 141–144 match the DEXH box motif; that stretch reads DECH. Positions 367–532 constitute a Helicase C-terminal domain; sequence KFIDVCLGIL…EFVQLFRVFK (166 aa). Residues 457–524 form a binding to the cap-specific mRNA (nucleoside-2'-O-)-methyltransferase region; the sequence is DIFILDMTWN…EIIQSKSKEF (68 aa).

This sequence belongs to the helicase family. NPH I subfamily. As to quaternary structure, monomer. Interacts (via C-terminus) with RAP94/OPG109 (via N-terminus). Interacts with the cap-specific mRNA (nucleoside-2'-O-)-methyltransferase OPG102.

The protein resides in the virion. The enzyme catalyses a ribonucleoside 5'-triphosphate + H2O = a ribonucleoside 5'-diphosphate + phosphate + H(+). DNA-dependent ATPase that acts as a 5' to 3' translocase on single-stranded DNA and thereby plays a role in transcription termination of viral early genes. Uses forward translocation in concert with the viral RNA polymerase RAP94/OPG109 subunit and the capping enzyme/VTF to catalyze release of UUUUUNU-containing nascent RNA from the elongation complex. In addition, acts as a positive elongation factor to assist transcription through problematic sequences. The sequence is that of Nucleoside triphosphatase I (OPG123) from Bos taurus (Bovine).